A 145-amino-acid polypeptide reads, in one-letter code: Ribosome maturation factor RimP (145 aa).

The protein belongs to the RimP family.

It localises to the cytoplasm. Its function is as follows. Required for maturation of 30S ribosomal subunits. The protein is Ribosome maturation factor RimP of Borreliella burgdorferi (strain ATCC 35210 / DSM 4680 / CIP 102532 / B31) (Borrelia burgdorferi).